A 259-amino-acid chain; its full sequence is Ribonuclease HII (259 aa).

The RNase H type-2 domain maps to 72–259 (SYIAGIDEVG…PIKDMIKNKL (188 aa)). 3 residues coordinate a divalent metal cation: Asp-78, Glu-79, and Asp-170.

This sequence belongs to the RNase HII family. Mn(2+) serves as cofactor. Requires Mg(2+) as cofactor.

The protein localises to the cytoplasm. The enzyme catalyses Endonucleolytic cleavage to 5'-phosphomonoester.. Functionally, endonuclease that specifically degrades the RNA of RNA-DNA hybrids. This chain is Ribonuclease HII, found in Bacillus cytotoxicus (strain DSM 22905 / CIP 110041 / 391-98 / NVH 391-98).